A 655-amino-acid chain; its full sequence is ATP-dependent zinc metalloprotease FtsH (655 aa).

The Cytoplasmic segment spans residues 1-17 (MPIETEPNRTRKNFEPK). Residues 18–38 (RFGGSLFILFTLLLFLNLFVL) traverse the membrane as a helical segment. Over 39 to 124 (RGPRFPITAY…APPPSSLSWL (86 aa)) the chain is Lumenal. Residues 125–145 (PTLLGWVVPPLIFFGIWSWLI) form a helical membrane-spanning segment. Topologically, residues 146–655 (NRNQGAGPAA…LNSHQLIGIN (510 aa)) are cytoplasmic. 216 to 223 (GPPGTGKT) is a binding site for ATP. Zn(2+) is bound at residue H440. Residue E441 is part of the active site. Zn(2+)-binding residues include H444 and D517.

This sequence in the central section; belongs to the AAA ATPase family. The protein in the C-terminal section; belongs to the peptidase M41 family. In terms of assembly, homohexamer. The cofactor is Zn(2+).

It localises to the cellular thylakoid membrane. Acts as a processive, ATP-dependent zinc metallopeptidase for both cytoplasmic and membrane proteins. Plays a role in the quality control of integral membrane proteins. The chain is ATP-dependent zinc metalloprotease FtsH from Acaryochloris marina (strain MBIC 11017).